Reading from the N-terminus, the 97-residue chain is Integration host factor subunit alpha (97 aa).

It belongs to the bacterial histone-like protein family. In terms of assembly, heterodimer of an alpha and a beta chain.

Functionally, this protein is one of the two subunits of integration host factor, a specific DNA-binding protein that functions in genetic recombination as well as in transcriptional and translational control. This chain is Integration host factor subunit alpha, found in Histophilus somni (strain 2336) (Haemophilus somnus).